A 228-amino-acid chain; its full sequence is UPF0758 protein H16_A3033 (228 aa).

The MPN domain occupies 102-224; the sequence is GFDGPAAVRN…IRSLADCCDR (123 aa). His-173, His-175, and Asp-186 together coordinate Zn(2+). The short motif at 173–186 is the JAMM motif element; the sequence is HNHPRGTTAPSQSD.

Belongs to the UPF0758 family.

The polypeptide is UPF0758 protein H16_A3033 (Cupriavidus necator (strain ATCC 17699 / DSM 428 / KCTC 22496 / NCIMB 10442 / H16 / Stanier 337) (Ralstonia eutropha)).